A 202-amino-acid polypeptide reads, in one-letter code: Pyridoxal 5'-phosphate synthase subunit PdxT (202 aa).

L-glutamine is bound at residue 52–54 (GES). Cys-84 (nucleophile) is an active-site residue. L-glutamine contacts are provided by residues Arg-116 and 143–144 (IR). Residues His-184 and Glu-186 each act as charge relay system in the active site.

It belongs to the glutaminase PdxT/SNO family. In the presence of PdxS, forms a dodecamer of heterodimers. Only shows activity in the heterodimer.

The catalysed reaction is aldehydo-D-ribose 5-phosphate + D-glyceraldehyde 3-phosphate + L-glutamine = pyridoxal 5'-phosphate + L-glutamate + phosphate + 3 H2O + H(+). It catalyses the reaction L-glutamine + H2O = L-glutamate + NH4(+). Its pathway is cofactor biosynthesis; pyridoxal 5'-phosphate biosynthesis. In terms of biological role, catalyzes the hydrolysis of glutamine to glutamate and ammonia as part of the biosynthesis of pyridoxal 5'-phosphate. The resulting ammonia molecule is channeled to the active site of PdxS. The chain is Pyridoxal 5'-phosphate synthase subunit PdxT from Pyrobaculum neutrophilum (strain DSM 2338 / JCM 9278 / NBRC 100436 / V24Sta) (Thermoproteus neutrophilus).